The sequence spans 185 residues: Elongation factor P (185 aa).

Belongs to the elongation factor P family.

The protein localises to the cytoplasm. It participates in protein biosynthesis; polypeptide chain elongation. Functionally, involved in peptide bond synthesis. Stimulates efficient translation and peptide-bond synthesis on native or reconstituted 70S ribosomes in vitro. Probably functions indirectly by altering the affinity of the ribosome for aminoacyl-tRNA, thus increasing their reactivity as acceptors for peptidyl transferase. This is Elongation factor P from Staphylococcus carnosus (strain TM300).